We begin with the raw amino-acid sequence, 145 residues long: D-aminoacyl-tRNA deacylase (145 aa).

A Gly-cisPro motif, important for rejection of L-amino acids motif is present at residues 137 to 138 (GP).

It belongs to the DTD family. In terms of assembly, homodimer.

It is found in the cytoplasm. The catalysed reaction is glycyl-tRNA(Ala) + H2O = tRNA(Ala) + glycine + H(+). It carries out the reaction a D-aminoacyl-tRNA + H2O = a tRNA + a D-alpha-amino acid + H(+). An aminoacyl-tRNA editing enzyme that deacylates mischarged D-aminoacyl-tRNAs. Also deacylates mischarged glycyl-tRNA(Ala), protecting cells against glycine mischarging by AlaRS. Acts via tRNA-based rather than protein-based catalysis; rejects L-amino acids rather than detecting D-amino acids in the active site. By recycling D-aminoacyl-tRNA to D-amino acids and free tRNA molecules, this enzyme counteracts the toxicity associated with the formation of D-aminoacyl-tRNA entities in vivo and helps enforce protein L-homochirality. The sequence is that of D-aminoacyl-tRNA deacylase from Proteus mirabilis (strain HI4320).